The primary structure comprises 417 residues: Serine hydroxymethyltransferase (417 aa).

Lys54 is modified (N6-acetyllysine). (6S)-5,6,7,8-tetrahydrofolate is bound by residues Leu121 and Gly125 to Leu127. Lys229 carries the N6-(pyridoxal phosphate)lysine modification. An N6-acetyllysine mark is found at Lys250, Lys285, and Lys354. A (6S)-5,6,7,8-tetrahydrofolate-binding site is contributed by Ser355–Phe357. Residue Lys375 is modified to N6-acetyllysine.

This sequence belongs to the SHMT family. In terms of assembly, homodimer. Requires pyridoxal 5'-phosphate as cofactor.

The protein resides in the cytoplasm. It catalyses the reaction (6R)-5,10-methylene-5,6,7,8-tetrahydrofolate + glycine + H2O = (6S)-5,6,7,8-tetrahydrofolate + L-serine. The protein operates within one-carbon metabolism; tetrahydrofolate interconversion. Its pathway is amino-acid biosynthesis; glycine biosynthesis; glycine from L-serine: step 1/1. Its function is as follows. Catalyzes the reversible interconversion of serine and glycine with tetrahydrofolate (THF) serving as the one-carbon carrier. This reaction serves as the major source of one-carbon groups required for the biosynthesis of purines, thymidylate, methionine, and other important biomolecules. Also exhibits THF-independent aldolase activity toward beta-hydroxyamino acids, producing glycine and aldehydes, via a retro-aldol mechanism. The sequence is that of Serine hydroxymethyltransferase from Shigella sonnei (strain Ss046).